The primary structure comprises 658 residues: MRNCVSPLLFAWTKHLRLREFKIPFPNRLVVRSLNQLSVHHEKVTGCRPRQASSDELHKYSKSASNEAFLSSFAENQLFHKCLPSSAGAVLSENDLMYIIRKVSEVYADNKTEKVTVPFDKHKNPFLIYVKKRFAECFDKNPDLCLIVYSKLEVETLAKITPIWINVAKKNKKEDFLVELCLRFLERFRSCNLTEQAILYQNFRENWWSNIKLPQNLKSLYVELCLVYHFHNSHLGMDSSTVSNLKRFCFSESLGHIFAPLRFQNQQLPLQHVYAFLFSIAYRDNQVDTAHFLYKQWSRAGMGPLPKDAFIKFVQLLSKNRNWVLMRDIVQLEEYNSYLLDHRIVSAFLKPLSEKGNYKDILSLISVWQHSVWRPSLAYLQVVYSFSMRALLVNRQYSSAFAFFWKIDPYIRNERLVSQMLQAASQLHYHDLILYVINTYYSGNIMKNLGNKDLICITQSSPPCNISGIKPGSLKLSPTTNTVLAKSICYWLNDAMALLFLLENQLNCKHSLFQRKSLIILLNGILNCPHSSYDLQFRAVSLLTGRIRLNVDFEVSVLASQLVFFVKHRDFKRTLITMKAISKLQKNFDVRIWNYWLVALIQQKLYSRAVKVYSKLICSSAVRNDTTRSLIRLIPKSYFKSYPLLKESETEKKTNSAL.

The transit peptide at 1-29 (MRNCVSPLLFAWTKHLRLREFKIPFPNRL) directs the protein to the mitochondrion. 2 PPR repeats span residues 130–164 (VKKRFAECFDKNPDLCLIVYSKLEVETLAKITPIW) and 220–254 (LYVELCLVYHFHNSHLGMDSSTVSNLKRFCFSESL).

The protein resides in the mitochondrion. In terms of biological role, mitochondrial RNA-binding protein required for the stability of the atp6 mRNA. The sequence is that of Pentatricopeptide repeat-containing protein 7, mitochondrial (ppr7) from Schizosaccharomyces pombe (strain 972 / ATCC 24843) (Fission yeast).